The primary structure comprises 143 residues: Peptide methionine sulfoxide reductase MsrB (143 aa).

Residues 16–139 (DAELRRRLTP…NSAALNFESR (124 aa)) form the MsrB domain. Zn(2+)-binding residues include C55, C58, C104, and C107. The active-site Nucleophile is the C128.

This sequence belongs to the MsrB Met sulfoxide reductase family. Zn(2+) is required as a cofactor.

It carries out the reaction L-methionyl-[protein] + [thioredoxin]-disulfide + H2O = L-methionyl-(R)-S-oxide-[protein] + [thioredoxin]-dithiol. The protein is Peptide methionine sulfoxide reductase MsrB of Burkholderia ambifaria (strain ATCC BAA-244 / DSM 16087 / CCUG 44356 / LMG 19182 / AMMD) (Burkholderia cepacia (strain AMMD)).